A 487-amino-acid polypeptide reads, in one-letter code: ATP synthase subunit beta 1 (487 aa).

162 to 169 is an ATP binding site; the sequence is GGAGVGKT.

It belongs to the ATPase alpha/beta chains family. In terms of assembly, F-type ATPases have 2 components, CF(1) - the catalytic core - and CF(0) - the membrane proton channel. CF(1) has five subunits: alpha(3), beta(3), gamma(1), delta(1), epsilon(1). CF(0) has three main subunits: a(1), b(2) and c(9-12). The alpha and beta chains form an alternating ring which encloses part of the gamma chain. CF(1) is attached to CF(0) by a central stalk formed by the gamma and epsilon chains, while a peripheral stalk is formed by the delta and b chains.

Its subcellular location is the cell inner membrane. The catalysed reaction is ATP + H2O + 4 H(+)(in) = ADP + phosphate + 5 H(+)(out). In terms of biological role, produces ATP from ADP in the presence of a proton gradient across the membrane. The catalytic sites are hosted primarily by the beta subunits. The chain is ATP synthase subunit beta 1 from Gluconobacter oxydans (strain 621H) (Gluconobacter suboxydans).